The sequence spans 20 residues: Dentinal fluid transport-stimulating peptide (20 aa).

Residues Gly-1–Gly-20 are disordered. A compositionally biased stretch (basic and acidic residues) spans Gln-8–Gly-20.

Functionally, this peptide stimulates the transport of dentinal fluid, which is important for the prevention of dental caries. This is Dentinal fluid transport-stimulating peptide from Rattus norvegicus (Rat).